The following is a 390-amino-acid chain: Probable purine permease 7 (390 aa).

10 consecutive transmembrane segments (helical) span residues 42-62, 74-94, 110-130, 131-151, 169-189, 205-225, 244-264, 286-306, 312-332, and 341-361; these read WLRVSIYVIFVLFCQPLATIL, TYVVTLLQLIGFPVLVLFRFF, SPSFTTLASVYLCTGLLVSAY, AYLSAVGLLYLPVSTFSLILA, FTPLIVSSLLLLTVSSALLVV, VIGFICTIGASAGIGLLLSLI, LAIYQSLVASCVVLIGLFASG, TLASAAISWQVYTLGLVGLIF, FSNSITAVGLPIVPVAAVIVF, and IFSIILAICGFLSFVYQHYLD.

The protein belongs to the purine permeases (TC 2.A.7.14) family.

The protein resides in the membrane. This Arabidopsis thaliana (Mouse-ear cress) protein is Probable purine permease 7 (PUP7).